Here is a 242-residue protein sequence, read N- to C-terminus: Ribonuclease PH (242 aa).

Phosphate contacts are provided by residues R86 and 124-126 (GTR).

The protein belongs to the RNase PH family. Homohexameric ring arranged as a trimer of dimers.

It carries out the reaction tRNA(n+1) + phosphate = tRNA(n) + a ribonucleoside 5'-diphosphate. In terms of biological role, phosphorolytic 3'-5' exoribonuclease that plays an important role in tRNA 3'-end maturation. Removes nucleotide residues following the 3'-CCA terminus of tRNAs; can also add nucleotides to the ends of RNA molecules by using nucleoside diphosphates as substrates, but this may not be physiologically important. Probably plays a role in initiation of 16S rRNA degradation (leading to ribosome degradation) during starvation. The sequence is that of Ribonuclease PH from Photorhabdus laumondii subsp. laumondii (strain DSM 15139 / CIP 105565 / TT01) (Photorhabdus luminescens subsp. laumondii).